The sequence spans 1310 residues: Contactin-associated protein-like 4 (1310 aa).

An N-terminal signal peptide occupies residues 1–27 (MNMGSVAGAVLKMLLLLSTQNWNRVEA). At 28-1243 (GNSYDCDEPL…LTHAIKSDSA (1216 aa)) the chain is on the extracellular side. The 147-residue stretch at 33 to 179 (CDEPLVSALP…IGMRIEVFGC (147 aa)) folds into the F5/8 type C domain. An intrachain disulfide couples cysteine 33 to cysteine 179. The Laminin G-like 1 domain maps to 214–346 (FKTMESDGIL…NLFYNGVDVI (133 aa)). Asparagine 262, asparagine 287, and asparagine 361 each carry an N-linked (GlcNAc...) asparagine glycan. Cystine bridges form between cysteine 334–cysteine 366, cysteine 517–cysteine 549, cysteine 555–cysteine 566, and cysteine 560–cysteine 575. In terms of domain architecture, Laminin G-like 2 spans 400-529 (FRTWNKAGLL…LISINNKMVD (130 aa)). The N-linked (GlcNAc...) asparagine glycan is linked to asparagine 540. The 38-residue stretch at 551–588 (ISDRCLPNSCEHGGECSQSWSTFHCNCTNTGYTGATCH) folds into the EGF-like 1 domain. Asparagine 576 carries N-linked (GlcNAc...) asparagine glycosylation. Residues cysteine 577 and cysteine 587 are joined by a disulfide bond. The region spanning 589–794 (SSVYEQSCEA…LLCRGDRPFW (206 aa)) is the Fibrinogen C-terminal domain. N-linked (GlcNAc...) asparagine glycosylation is found at asparagine 604, asparagine 627, asparagine 639, asparagine 708, and asparagine 750. The 166-residue stretch at 795-960 (NAASFNTEAS…TVTPGVQPGC (166 aa)) folds into the Laminin G-like 3 domain. Disulfide bonds link cysteine 933/cysteine 960, cysteine 964/cysteine 977, cysteine 971/cysteine 986, and cysteine 988/cysteine 998. In terms of domain architecture, EGF-like 2 spans 960–999 (CRGHCGSYGKLCRHGGKCREKPSGFFCDCSSSAYAGPFCS). N-linked (GlcNAc...) asparagine glycosylation is found at asparagine 1019, asparagine 1025, and asparagine 1075. A Laminin G-like 4 domain is found at 1048–1204 (FRTTRAPSLL…VTGHVTESSC (157 aa)). Cysteine 1169 and cysteine 1204 are oxidised to a cystine. The helical transmembrane segment at 1244-1264 (VIGGLIAVVIFILLCVSAIAV) threads the bilayer. Residues 1265–1310 (RIYQQKRLYKRNEAKRSENVDSAEAVLKSELHIQNAVGENQKEYFF) are Cytoplasmic-facing.

It belongs to the neurexin family. As to quaternary structure, interacts with TIAM1. As to expression, specifically present in developing cortical interneurons: highly expressed in cortical parvalbumin (PV) cells and midbrain dopaminergic neurons and is localized presynaptically (at protein level). Also present in the substantia nigra pars compacta (SnC) and ventral tegmental area (VTA) midbrain dopaminergic projection populations.

It is found in the presynaptic cell membrane. Functionally, presynaptic protein involved in both dopaminergic synaptic transmission and GABAergic system, thereby participating in the structural maturation of inhibitory interneuron synapses. Involved in the dopaminergic synaptic transmission by attenuating dopamine release through a presynaptic mechanism. Also participates in the GABAergic system. The polypeptide is Contactin-associated protein-like 4 (Cntnap4) (Mus musculus (Mouse)).